The chain runs to 155 residues: Large ribosomal subunit protein uL22c (155 aa).

Belongs to the universal ribosomal protein uL22 family. As to quaternary structure, part of the 50S ribosomal subunit.

Its subcellular location is the plastid. The protein localises to the chloroplast. Functionally, this protein binds specifically to 23S rRNA. Its function is as follows. The globular domain of the protein is located near the polypeptide exit tunnel on the outside of the subunit, while an extended beta-hairpin is found that lines the wall of the exit tunnel in the center of the 70S ribosome. The protein is Large ribosomal subunit protein uL22c (rpl22) of Nicotiana tomentosiformis (Tobacco).